The chain runs to 278 residues: Large ribosomal subunit protein uL2 (278 aa).

Disordered stretches follow at residues 1 to 58 and 225 to 278; these read MAIR…GGGH and VMNP…KNKR. Basic residues predominate over residues 37–58; the sequence is LHGRGGRNAHGRITTRHKGGGH. Residues 253-267 are compositionally biased toward basic and acidic residues; the sequence is PEGRTRKNKASDKLI. Basic residues predominate over residues 268 to 278; the sequence is VRRRRTGKNKR.

It belongs to the universal ribosomal protein uL2 family. As to quaternary structure, part of the 50S ribosomal subunit. Forms a bridge to the 30S subunit in the 70S ribosome.

Functionally, one of the primary rRNA binding proteins. Required for association of the 30S and 50S subunits to form the 70S ribosome, for tRNA binding and peptide bond formation. It has been suggested to have peptidyltransferase activity; this is somewhat controversial. Makes several contacts with the 16S rRNA in the 70S ribosome. The protein is Large ribosomal subunit protein uL2 of Rhodococcus opacus (strain B4).